The following is a 131-amino-acid chain: MKLQQNCDLELRLFPTSYDSDSSDTTSVVESTSSGNPQPNEESQRITIFYNGKMCFSSDVTHLQARSIISIASREMKTKSSSNGSDPPNKSTSFHHNQLPNPKASMKKSLQSFLQKRKIRIQATSPYHSRR.

The EAR signature appears at 9 to 13 (LELRL). Disordered regions lie at residues 14 to 44 (FPTSYDSDSSDTTSVVESTSSGNPQPNEESQ) and 74 to 131 (REMK…HSRR). Residues 16-34 (TSYDSDSSDTTSVVESTSS) show a composition bias toward low complexity. The Tify domain occupies 39–74 (PNEESQRITIFYNGKMCFSSDVTHLQARSIISIASR). The span at 79-100 (KSSSNGSDPPNKSTSFHHNQLP) shows a compositional bias: polar residues. The Jas signature appears at 105 to 127 (SMKKSLQSFLQKRKIRIQATSPY). The short motif at 106-113 (MKKSLQSF) is the Nuclear localization signal element. Residues 122 to 131 (QATSPYHSRR) show a composition bias toward polar residues.

The protein belongs to the TIFY/JAZ family. In terms of assembly, interacts with TPL and weakly with COI1, but not with AFPH2/NINJA. Interacts with MYC2, MYB21, MYB24, TIFY10A/JAZ1, TIFY10B/JAZ2, TIFY6B/JAZ3, TIFY6A/JAZ4, TIFY11A/JAZ5, TIFY11B/JAZ6, TIFY7/JAZ9, TIFY9/JAZ10 and TIFY3B/JAZ12. Interacts with RHD6 and RSL1. (Microbial infection) Interacts with the pathogenic Pseudomonas syringae HopZ1a protein. (Microbial infection) Acetylated by Pseudomonas syringae HopZ1a. In terms of processing, ubiquitinated.

Its subcellular location is the nucleus. Its function is as follows. Repressor of jasmonate responses. Unable to associate strongly with COI1 in the presence of jasmonoyl-isoleucine (JA-Ile) and is therefore more resistant to JA-mediated-degradation than other TIFY/JAZ proteins. Repress gene expression through direct recruitment of the corepressor TOPLESS to cognate transcription factors. Interacts with and suppresses RHD6 and RSL1 transcription factor activities to negatively regulate jasmonate-stimulated root hair development. The protein is Protein TIFY 5A of Arabidopsis thaliana (Mouse-ear cress).